Consider the following 89-residue polypeptide: MAKKSKIAKYRKQQMLVAKYAEIRKQLKVNHDYESLRKLPKDSNPIRLKNRDEIDGRPRAYMRKFKMSRINFRELAHQGKIPGVHKASW.

Belongs to the universal ribosomal protein uS14 family. Part of the 30S ribosomal subunit. Contacts proteins S3 and S10.

Binds 16S rRNA, required for the assembly of 30S particles and may also be responsible for determining the conformation of the 16S rRNA at the A site. This is Small ribosomal subunit protein uS14A from Ligilactobacillus salivarius (strain UCC118) (Lactobacillus salivarius).